Consider the following 224-residue polypeptide: Small ribosomal subunit protein uS3 (224 aa).

Residues 39–107 (IREFLKKKPS…DVWVEIAEVK (69 aa)) form the KH type-2 domain.

The protein belongs to the universal ribosomal protein uS3 family. In terms of assembly, part of the 30S ribosomal subunit. Forms a tight complex with proteins S10 and S14.

Binds the lower part of the 30S subunit head. Binds mRNA in the 70S ribosome, positioning it for translation. The polypeptide is Small ribosomal subunit protein uS3 (Chlamydia trachomatis serovar L2 (strain ATCC VR-902B / DSM 19102 / 434/Bu)).